We begin with the raw amino-acid sequence, 182 residues long: Ribulose bisphosphate carboxylase small subunit, chloroplastic 5 (182 aa).

The N-terminal 49 residues, Met1–Val49, are a transit peptide targeting the chloroplast.

This sequence belongs to the RuBisCO small chain family. Heterohexadecamer of 8 large and 8 small subunits.

It localises to the plastid. The protein localises to the chloroplast. In terms of biological role, ruBisCO catalyzes two reactions: the carboxylation of D-ribulose 1,5-bisphosphate, the primary event in carbon dioxide fixation, as well as the oxidative fragmentation of the pentose substrate. Both reactions occur simultaneously and in competition at the same active site. Although the small subunit is not catalytic it is essential for maximal activity. The sequence is that of Ribulose bisphosphate carboxylase small subunit, chloroplastic 5 from Mesembryanthemum crystallinum (Common ice plant).